The primary structure comprises 159 residues: Ribosomal RNA large subunit methyltransferase H (159 aa).

S-adenosyl-L-methionine contacts are provided by residues L76, G108, and 127–132; that span reads FSKMTL.

This sequence belongs to the RNA methyltransferase RlmH family. In terms of assembly, homodimer.

It localises to the cytoplasm. It carries out the reaction pseudouridine(1915) in 23S rRNA + S-adenosyl-L-methionine = N(3)-methylpseudouridine(1915) in 23S rRNA + S-adenosyl-L-homocysteine + H(+). In terms of biological role, specifically methylates the pseudouridine at position 1915 (m3Psi1915) in 23S rRNA. The protein is Ribosomal RNA large subunit methyltransferase H of Bacillus cytotoxicus (strain DSM 22905 / CIP 110041 / 391-98 / NVH 391-98).